The sequence spans 147 residues: MGMLELVGEYWEQLKITVVPVVAAAEDDDNEQHEEKAAEGEEKEEENGDEDEDEDEDEDDDDDDDEDEEEEEEVTDQLEDLREHFKNTEEGKALVHHYEECAERVKIQQQQPGYADLEHKEDCVEEFFHLQHYLDTATAPRLFDKLK.

The tract at residues 25–89 (AEDDDNEQHE…DLREHFKNTE (65 aa)) is disordered. Positions 41–78 (EEKEEENGDEDEDEDEDEDDDDDDDEDEEEEEEVTDQL) are enriched in acidic residues. A compositionally biased stretch (basic and acidic residues) spans 79-89 (EDLREHFKNTE). The cysteines at positions 101 and 123 are disulfide-linked.

Belongs to the UQCRH/QCR6 family. Component of the ubiquinol-cytochrome c oxidoreductase (cytochrome b-c1 complex, complex III, CIII), a multisubunit enzyme composed of 10 subunits. The complex is composed of 3 respiratory subunits cytochrome b (COB), cytochrome c1 (CYT1) and Rieske protein (RIP1), 2 core protein subunits COR1 and QCR2, and 5 low-molecular weight protein subunits QCR6, QCR7, QCR8, QCR9 and QCR10. The complex exists as an obligatory dimer and forms supercomplexes (SCs) in the inner mitochondrial membrane with a monomer or a dimer of cytochrome c oxidase (complex IV, CIV), resulting in 2 different assemblies (supercomplexes III(2)IV and III(2)IV(2)). QCR6 interacts with COX5A at the CIII-CIV interface.

It localises to the mitochondrion inner membrane. Functionally, component of the ubiquinol-cytochrome c oxidoreductase, a multisubunit transmembrane complex that is part of the mitochondrial electron transport chain which drives oxidative phosphorylation. The respiratory chain contains 3 multisubunit complexes succinate dehydrogenase (complex II, CII), ubiquinol-cytochrome c oxidoreductase (cytochrome b-c1 complex, complex III, CIII) and cytochrome c oxidase (complex IV, CIV), that cooperate to transfer electrons derived from NADH and succinate to molecular oxygen, creating an electrochemical gradient over the inner membrane that drives transmembrane transport and the ATP synthase. The cytochrome b-c1 complex catalyzes electron transfer from ubiquinol to cytochrome c, linking this redox reaction to translocation of protons across the mitochondrial inner membrane, with protons being carried across the membrane as hydrogens on the quinol. In the process called Q cycle, 2 protons are consumed from the matrix, 4 protons are released into the intermembrane space and 2 electrons are passed to cytochrome c. The chain is Cytochrome b-c1 complex subunit 6, mitochondrial (QCR6) from Saccharomyces cerevisiae (strain ATCC 204508 / S288c) (Baker's yeast).